A 1214-amino-acid chain; its full sequence is Protein argonaute-2 (1214 aa).

A disordered region spans residues 1–412; it reads MGKKDKNKKG…GSIKRGTIGK (412 aa). Composition is skewed to low complexity over residues 18–93 and 107–117; these read PQPQ…QQKS and KQQVQGWTKQG. Gly residues-rich tracts occupy residues 118 to 131, 141 to 154, 164 to 177, 187 to 200, 210 to 223, 233 to 246, and 256 to 269; these read QQGG…GQDG and QQGG…GQEG. Over residues 270–282 the composition is skewed to low complexity; that stretch reads GYQQRPPGQQQGG. Composition is skewed to gly residues over residues 302–315, 325–338, and 348–361; these read QQGG…GQEG. The span at 362-394 shows a compositional bias: low complexity; it reads GYQQRPPGQQPNQTQSQGQYQSRGPPQQQQAAP. The 110-residue stretch at 608-717 folds into the PAZ domain; sequence LERFSLKAKI…LPIELCSIEE (110 aa). The tract at residues 681–686 is interaction with guide RNA; that stretch reads YFHSRN. In terms of domain architecture, Piwi spans 885–1186; that stretch reads LAIVIIPQFR…ARGRVYLTGT (302 aa). Positions 965 and 1037 each coordinate a divalent metal cation. 3 interaction with guide RNA regions span residues 1075–1076, 1119–1127, and 1156–1178; these read KR, HQAIQGTAK, and FPRC…VAAR. Histidine 1173 provides a ligand contact to a divalent metal cation.

Belongs to the argonaute family. Ago subfamily. In terms of assembly, interacts with Fmr1, Dcr-1 and vig to form the RNA-induced silencing complex (RISC), a ribonucleoprotein (RNP) complex involved in translation regulation, other components of the complex are RpL5, RpL11 and Rm62. As part of the RISC complex, interacts with Tudor-SN. Interacts with Taf11. As to quaternary structure, (Microbial infection) Interacts with cricket paralysis virus protein 1A; this interaction may block the RISC activity. The cofactor is Mg(2+). Requires Mn(2+) as cofactor.

Its subcellular location is the nucleus. The protein localises to the cytoplasm. It localises to the cytoplasmic ribonucleoprotein granule. Functionally, essential for RNA interference (RNAi); double-stranded RNA induces potent and specific gene silencing. RNAi is mediated by the RNA-induced silencing complex (RISC), a sequence-specific, multicomponent nuclease that destroys or silences messenger RNAs homologous to the silencing trigger. This is Protein argonaute-2 from Drosophila melanogaster (Fruit fly).